The following is a 413-amino-acid chain: Protein trichome birefringence-like 9 (413 aa).

Residues 22–42 (LFVSLFLLSLLIFSTVVVDVM) form a helical; Signal-anchor for type II membrane protein membrane-spanning segment. Residues 141–143 (GDS) carry the GDS motif motif. A DCXHWCLPGXXDXWN motif motif is present at residues 384-398 (DCSHWCLPGVPDTWN).

It belongs to the PC-esterase family. TBL subfamily.

The protein localises to the membrane. In terms of biological role, may act as a bridging protein that binds pectin and other cell wall polysaccharides. Probably involved in maintaining esterification of pectins. May be involved in the specific O-acetylation of cell wall polymers. The protein is Protein trichome birefringence-like 9 (TBL9) of Arabidopsis thaliana (Mouse-ear cress).